A 794-amino-acid polypeptide reads, in one-letter code: Ent-copalyl diphosphate synthase 2 (794 aa).

A chloroplast-targeting transit peptide spans 1-35; the sequence is MSSSSNVTSLPRLTTAGGVFPREMVRVHSSCNILR. Lys238 is a binding site for substrate. The Mg(2+) site is built by Asp369 and Asp371. Positions 369-372 match the DXDD motif motif; sequence DVDD. Substrate is bound at residue Lys455.

It belongs to the terpene synthase family. Tpsc subfamily. Requires Mg(2+) as cofactor. In terms of tissue distribution, expressed in leaves.

The protein resides in the plastid. It localises to the chloroplast. It catalyses the reaction (2E,6E,10E)-geranylgeranyl diphosphate = ent-copalyl diphosphate. It participates in secondary metabolite biosynthesis; terpenoid biosynthesis. In terms of biological role, involved in the biosynthesis of ent-kaurene diterpenoids natural products such as oridonin, miltiradiene, eriocalyxin B and nezukol, known to exhibit antitumor, anti-inflammatory and antibacterial activities. Catalyzes the conversion of (2E,6E,10E)-geranylgeranyl diphosphate (GGPP) to ent-copalyl diphosphate (ent-CPP). The protein is Ent-copalyl diphosphate synthase 2 of Isodon eriocalyx (Plectranthus eriocalyx).